The following is a 217-amino-acid chain: Uridylate kinase (217 aa).

ATP is bound at residue 6–10 (KLSGR). Position 38 (Gly-38) interacts with UMP. Residues Gly-39 and Arg-43 each contribute to the ATP site. UMP-binding positions include Asp-60 and 107-113 (FQPGQST). ATP-binding residues include Asn-134, Tyr-139, and Asp-142.

Belongs to the UMP kinase family. Homohexamer.

The protein resides in the cytoplasm. The catalysed reaction is UMP + ATP = UDP + ADP. It functions in the pathway pyrimidine metabolism; CTP biosynthesis via de novo pathway; UDP from UMP (UMPK route): step 1/1. With respect to regulation, inhibited by UTP. Catalyzes the reversible phosphorylation of UMP to UDP. The chain is Uridylate kinase from Pyrobaculum aerophilum (strain ATCC 51768 / DSM 7523 / JCM 9630 / CIP 104966 / NBRC 100827 / IM2).